Here is a 497-residue protein sequence, read N- to C-terminus: Aldehyde dehydrogenase (497 aa).

241 to 246 contributes to the NAD(+) binding site; that stretch reads GSTLVG. The Proton acceptor role is filled by Glu-264. Cys-298 (nucleophile) is an active-site residue.

It belongs to the aldehyde dehydrogenase family.

It catalyses the reaction an aldehyde + NAD(+) + H2O = a carboxylate + NADH + 2 H(+). It functions in the pathway alcohol metabolism; ethanol degradation; acetate from ethanol: step 2/2. The protein is Aldehyde dehydrogenase (aldA) of Emericella nidulans (strain FGSC A4 / ATCC 38163 / CBS 112.46 / NRRL 194 / M139) (Aspergillus nidulans).